We begin with the raw amino-acid sequence, 349 residues long: Phosphate carrier protein, mitochondrial (349 aa).

Solcar repeat units follow at residues 47–131 (KYFA…FKVQ), 144–229 (YRTF…TVEL), and 246–324 (EQLV…VKVW). The next 6 membrane-spanning stretches (helical) occupy residues 48–68 (YFAL…TAVV), 108–128 (APTF…YEVF), 147–167 (FVYL…LSPL), 207–227 (PLWG…EKTV), 248–268 (LVVT…VSHP), and 304–324 (IIMI…VKVW).

Belongs to the mitochondrial carrier (TC 2.A.29) family.

Its subcellular location is the mitochondrion inner membrane. Functionally, transport of phosphate groups from the cytosol to the mitochondrial matrix. The protein is Phosphate carrier protein, mitochondrial of Choristoneura fumiferana (Spruce budworm moth).